Reading from the N-terminus, the 633-residue chain is MTNSNLRTENHFDYVKITLASPERVMSWGQRTLPNGQVVGEVTKPETINYRTLKPEMDGLFCEKIFGPSKDWECHCGKYKRVRHRGIVCERCGVEVTESRVRRHRMGFIKLAAPVSHVWYLKGIPSYVAILLDMPLRDVEQIVYFNCYVVLDQGDHKDLKYKQLLTEDEWLEIEDEIYAEDSTIENEPVVGIGAEALQQLLEDLDLKEIAETLREEITGSKGQKRAKLIKRLRVIDNFIATNARPEWMVLDAIPVIPPDLRPMVQLDGGRFATSDLNDLYRRVINRNNRLARLQEILAPEIIVRNEKRMLQEAVDALVDNGRRGRTVVGANNRALKSLSDIIEGKQGRFRQNLLGKRVDYSGRSVIVVGPKLKMHQCGLPKEMAIELFQPFVIHRLIRQNIVNNIKAAKKLIQRADDEVMQVLQEVIDGHPILLNRAPTLHRLGIQAFEPKLVDGRAIQLHPLVCPAFNADFDGDQMAVHVPLAIESQTEARMLMLASNNILSPATGEPIVTPSQDMVLGSYYLTAIQPEASKPDFGDQSKTFASLDDVINAFEDKRIKLHDWVWVRFNGEVDDDDHGEPSHSETLEDGTRIEQWNLRRDRLDEQGALISRFVLTTVGRVVMNHTIIDAVAIA.

4 residues coordinate Zn(2+): C74, C76, C89, and C92. D471, D473, and D475 together coordinate Mg(2+).

This sequence belongs to the RNA polymerase beta' chain family. RpoC1 subfamily. As to quaternary structure, in cyanobacteria the RNAP catalytic core is composed of 2 alpha, 1 beta, 1 beta', 1 gamma and 1 omega subunit. When a sigma factor is associated with the core the holoenzyme is formed, which can initiate transcription. Mg(2+) serves as cofactor. The cofactor is Zn(2+).

It carries out the reaction RNA(n) + a ribonucleoside 5'-triphosphate = RNA(n+1) + diphosphate. In terms of biological role, DNA-dependent RNA polymerase catalyzes the transcription of DNA into RNA using the four ribonucleoside triphosphates as substrates. The polypeptide is DNA-directed RNA polymerase subunit gamma (Prochlorococcus marinus (strain MIT 9211)).